We begin with the raw amino-acid sequence, 211 residues long: FMN-dependent NADH:quinone oxidoreductase (211 aa).

17-19 contributes to the FMN binding site; the sequence is SYS.

This sequence belongs to the azoreductase type 1 family. Homodimer. The cofactor is FMN.

The catalysed reaction is 2 a quinone + NADH + H(+) = 2 a 1,4-benzosemiquinone + NAD(+). The enzyme catalyses N,N-dimethyl-1,4-phenylenediamine + anthranilate + 2 NAD(+) = 2-(4-dimethylaminophenyl)diazenylbenzoate + 2 NADH + 2 H(+). Its function is as follows. Quinone reductase that provides resistance to thiol-specific stress caused by electrophilic quinones. Functionally, also exhibits azoreductase activity. Catalyzes the reductive cleavage of the azo bond in aromatic azo compounds to the corresponding amines. In Bacillus pumilus (strain SAFR-032), this protein is FMN-dependent NADH:quinone oxidoreductase.